The following is a 208-amino-acid chain: N-(5'-phosphoribosyl)anthranilate isomerase (208 aa).

This sequence belongs to the TrpF family.

It catalyses the reaction N-(5-phospho-beta-D-ribosyl)anthranilate = 1-(2-carboxyphenylamino)-1-deoxy-D-ribulose 5-phosphate. The protein operates within amino-acid biosynthesis; L-tryptophan biosynthesis; L-tryptophan from chorismate: step 3/5. The protein is N-(5'-phosphoribosyl)anthranilate isomerase of Deinococcus radiodurans (strain ATCC 13939 / DSM 20539 / JCM 16871 / CCUG 27074 / LMG 4051 / NBRC 15346 / NCIMB 9279 / VKM B-1422 / R1).